We begin with the raw amino-acid sequence, 860 residues long: Probable linoleate 9S-lipoxygenase 4 (860 aa).

The PLAT domain occupies 29–159; the sequence is NALDFTDLAG…RYKSDRIFFA (131 aa). A Lipoxygenase domain is found at 162-860; it reads PYLPSETPEL…GKGIPNSVSI (699 aa). The disordered stretch occupies residues 209–246; the sequence is PDQGKENVRTTLGGSADYPYPRRGRTGRPPTRTDPKSE. Histidine 521, histidine 526, histidine 712, asparagine 716, and isoleucine 860 together coordinate Fe cation.

Belongs to the lipoxygenase family. As to quaternary structure, monomer. Fe cation is required as a cofactor. In terms of tissue distribution, expressed in tubers and roots. Not detected in leaves, flowers, stems, shoot tips, or axillary buds.

Its subcellular location is the cytoplasm. It carries out the reaction (9Z,12Z)-octadecadienoate + O2 = (9S)-hydroperoxy-(10E,12Z)-octadecadienoate. It participates in lipid metabolism; oxylipin biosynthesis. In terms of biological role, plant lipoxygenases may be involved in a number of diverse aspects of plant physiology including growth and development, pest resistance, and senescence or responses to wounding. Catalyzes the hydroperoxidation of lipids containing a cis,cis-1,4-pentadiene structure. This chain is Probable linoleate 9S-lipoxygenase 4 (LOX1.4), found in Solanum tuberosum (Potato).